Consider the following 321-residue polypeptide: Major immediate early protein (321 aa).

The RING-type zinc-finger motif lies at Cys86–Asn139. A leucine-zipper region spans residues Leu228 to Leu249.

The protein resides in the host nucleus. Functionally, plays some regulatory role in both viral DNA replication and transcriptional transactivation. This chain is Major immediate early protein (PE38), found in Lepidoptera (butterflies and moths).